We begin with the raw amino-acid sequence, 316 residues long: Ribosomal protein L11 methyltransferase (316 aa).

Residues threonine 159, glycine 179, aspartate 201, and asparagine 243 each coordinate S-adenosyl-L-methionine.

The protein belongs to the methyltransferase superfamily. PrmA family.

It localises to the cytoplasm. The enzyme catalyses L-lysyl-[protein] + 3 S-adenosyl-L-methionine = N(6),N(6),N(6)-trimethyl-L-lysyl-[protein] + 3 S-adenosyl-L-homocysteine + 3 H(+). In terms of biological role, methylates ribosomal protein L11. This is Ribosomal protein L11 methyltransferase from Gloeobacter violaceus (strain ATCC 29082 / PCC 7421).